Here is a 189-residue protein sequence, read N- to C-terminus: MEVILLERIGRLGQMGDTVKVKDGYARNFLLPQGKALRANEANKKKFEGQRAQLEAQNLERKNEAQAVADKLNGESFIVVRSAGETGQLYGSVSTRDIAEIITANGFTLHRNQVELNHPIKTIGLHEVSVSLHPEVQVKVMVNIARSTEEAECQAKGEDLTSIEAIYGIEEQPLSEEVFDDEDEAEDQA.

Belongs to the bacterial ribosomal protein bL9 family.

Binds to the 23S rRNA. The chain is Large ribosomal subunit protein bL9 from Brucella melitensis biotype 2 (strain ATCC 23457).